The chain runs to 198 residues: Na(+)-translocating NADH-quinone reductase subunit E (198 aa).

A run of 6 helical transmembrane segments spans residues 11 to 31 (SIFI…FLAV), 39 to 59 (FGLG…NNLV), 77 to 97 (FLNF…LEMV), 110 to 130 (GIFL…SFMV), 140 to 160 (IVYG…LAGI), and 176 to 196 (LGIT…FSGV).

Belongs to the NqrDE/RnfAE family. Composed of six subunits; NqrA, NqrB, NqrC, NqrD, NqrE and NqrF. In terms of processing, the N-terminus is blocked.

Its subcellular location is the cell inner membrane. It catalyses the reaction a ubiquinone + n Na(+)(in) + NADH + H(+) = a ubiquinol + n Na(+)(out) + NAD(+). Its activity is regulated as follows. This reaction is tightly coupled to the Na(+) pumping activity and specifically requires Na(+) for activity. Inhibited by korormicin and 2-N-heptyl-4-hydroxyquinoline N-oxide (HQNO). In terms of biological role, NQR complex catalyzes the reduction of ubiquinone-1 to ubiquinol by two successive reactions, coupled with the transport of Na(+) ions from the cytoplasm to the periplasm. NqrA to NqrE are probably involved in the second step, the conversion of ubisemiquinone to ubiquinol. This is Na(+)-translocating NADH-quinone reductase subunit E from Vibrio alginolyticus.